A 268-amino-acid polypeptide reads, in one-letter code: Ribosomal RNA small subunit methyltransferase A (268 aa).

Asparagine 23, isoleucine 25, glycine 50, glutamate 72, aspartate 97, and asparagine 116 together coordinate S-adenosyl-L-methionine.

Belongs to the class I-like SAM-binding methyltransferase superfamily. rRNA adenine N(6)-methyltransferase family. RsmA subfamily.

The protein resides in the cytoplasm. It carries out the reaction adenosine(1518)/adenosine(1519) in 16S rRNA + 4 S-adenosyl-L-methionine = N(6)-dimethyladenosine(1518)/N(6)-dimethyladenosine(1519) in 16S rRNA + 4 S-adenosyl-L-homocysteine + 4 H(+). Functionally, specifically dimethylates two adjacent adenosines (A1518 and A1519) in the loop of a conserved hairpin near the 3'-end of 16S rRNA in the 30S particle. May play a critical role in biogenesis of 30S subunits. The polypeptide is Ribosomal RNA small subunit methyltransferase A (Rickettsia bellii (strain RML369-C)).